Consider the following 550-residue polypeptide: Efflux pump DEP3 (550 aa).

The disordered stretch occupies residues 1 to 33 (MSEQSTLAGPYTEKPGVESQNPTGDGKASFDET). 11 helical membrane-spanning segments follow: residues 44-64 (AIAY…NTIV), 78-98 (LELI…ILLW), 109-129 (WVYI…GAAP), 139-159 (VIAG…VSVL), 172-192 (STVV…AFAA), 199-219 (WGFY…MILF), 242-262 (AVIF…GGVV), 268-288 (GTII…IVLL), 319-339 (FLAS…FQFI), 351-371 (LLPL…LMPK), and 373-393 (GLIP…SALM). A glycan (N-linked (GlcNAc...) asparagine) is linked at Asn-399. Transmembrane regions (helical) follow at residues 410 to 430 (ILVG…VQSL), 439 to 459 (AVGA…AICG), and 515 to 535 (SIWA…WPLF).

It belongs to the major facilitator superfamily. TCR/Tet family.

The protein resides in the cell membrane. In terms of biological role, efflux pump; part of the gene cluster that mediates the biosynthesis of depudecin, a highly oxidized eleven-carbon linear polyketide that acts as a histone deacetylase (HDAC) inhibitor and makes a small contribution to pathogenesis. Is presumed either to be responsible for exporting depudecin, to provide self-protection, or both. The polypeptide is Efflux pump DEP3 (Fusarium langsethiae).